The sequence spans 355 residues: Uroporphyrinogen decarboxylase (355 aa).

Substrate contacts are provided by residues 27-31 (RQAGR), Asp78, Tyr155, Ser210, and His328.

Belongs to the uroporphyrinogen decarboxylase family. As to quaternary structure, homodimer.

It is found in the cytoplasm. The enzyme catalyses uroporphyrinogen III + 4 H(+) = coproporphyrinogen III + 4 CO2. The protein operates within porphyrin-containing compound metabolism; protoporphyrin-IX biosynthesis; coproporphyrinogen-III from 5-aminolevulinate: step 4/4. Catalyzes the decarboxylation of four acetate groups of uroporphyrinogen-III to yield coproporphyrinogen-III. The sequence is that of Uroporphyrinogen decarboxylase from Pseudomonas aeruginosa (strain UCBPP-PA14).